A 729-amino-acid chain; its full sequence is Probable ATP-dependent RNA helicase DDX4 (729 aa).

The segment at 22 to 246 (FEKDRYSSGA…ESGDTQGPKV (225 aa)) is disordered. Over residues 29-45 (SGANGDTFNRTPASSSE) the composition is skewed to polar residues. A compositionally biased stretch (basic and acidic residues) spans 71-80 (DPGESNKREN). 2 stretches are compositionally biased toward gly residues: residues 152 to 164 (RGSF…GFGR) and 204 to 214 (SGGGSGRGGYK). Residues Ser-224 and Ser-228 each carry the phosphoserine modification. The tract at residues 230 to 249 (KSEAEGGESGDTQGPKVTYI) is interaction with RANBP9. Residues 290 to 318 (LTFEEANLCQTLNNNIAKAGYTKLTPVQK) carry the Q motif motif. One can recognise a Helicase ATP-binding domain in the interval 321-504 (IPIIQGGRDL…GEFLKSNYLF (184 aa)). 334–341 (AQTGSGKT) lines the ATP pocket. The short motif at 448-451 (DEAD) is the DEAD box element. The 146-residue stretch at 532–677 (KLVEILRNIG…DVPAWLEEIA (146 aa)) folds into the Helicase C-terminal domain. Over residues 706–720 (KSSLNTAGFSSTQAP) the composition is skewed to polar residues. Residues 706–729 (KSSLNTAGFSSTQAPNPVDDESWD) form a disordered region. Ser-727 carries the post-translational modification Phosphoserine.

Belongs to the DEAD box helicase family. DDX4/VASA subfamily. In terms of assembly, found in a mRNP complex, at least composed of TDRD1, TDRD6, TDRD7 and DDX4. Interacts with RANBP9. Interacts with RANBP10. Interacts with PIWIL2 and MAEL. Interacts with BMAL1 and CLOCK. Interacts with Tex19.1 and, probably, Tex19.2. Interacts with RBM46.

Its subcellular location is the cytoplasm. The protein resides in the perinuclear region. It catalyses the reaction ATP + H2O = ADP + phosphate + H(+). In terms of biological role, ATP-dependent RNA helicase required during spermatogenesis to repress transposable elements and preventing their mobilization, which is essential for the germline integrity. Acts via the piRNA metabolic process, which mediates the repression of transposable elements during meiosis by forming complexes composed of piRNAs and Piwi proteins and governs the methylation and subsequent repression of transposons. Involved in the secondary piRNAs metabolic process, the production of piRNAs in fetal male germ cells through a ping-pong amplification cycle. Required for PIWIL2 slicing-triggered piRNA biogenesis: helicase activity enables utilization of one of the slice cleavage fragments generated by PIWIL2 and processing these pre-piRNAs into piRNAs. The chain is Probable ATP-dependent RNA helicase DDX4 (DDX4) from Bos taurus (Bovine).